Reading from the N-terminus, the 221-residue chain is Protein N-terminal glutamine amidohydrolase (221 aa).

Position 2 is an N-acetylserine (Ser-2). Catalysis depends on residues Cys-23, His-79, and Asp-97.

This sequence belongs to the NTAQ1 family. In terms of assembly, monomer.

It catalyses the reaction N-terminal L-glutaminyl-[protein] + H2O = N-terminal L-glutamyl-[protein] + NH4(+). Its function is as follows. Mediates the side-chain deamidation of N-terminal glutamine residues to glutamate, an important step in N-end rule pathway of protein degradation. Conversion of the resulting N-terminal glutamine to glutamate renders the protein susceptible to arginylation, polyubiquitination and degradation as specified by the N-end rule. Does not act on substrates with internal or C-terminal glutamine and does not act on non-glutamine residues in any position. Involved in immune response. Controls the expression of specific defense-response genes, activates the synthesis pathway for the phytoalexin camalexin, and influences basal resistance to the hemibiotroph pathogen Pseudomonas syringae pv tomato (Pst). The polypeptide is Protein N-terminal glutamine amidohydrolase (Arabidopsis thaliana (Mouse-ear cress)).